A 125-amino-acid chain; its full sequence is Ribosome maturation factor RimP (125 aa).

The protein belongs to the RimP family.

The protein localises to the cytoplasm. Functionally, required for maturation of 30S ribosomal subunits. The polypeptide is Ribosome maturation factor RimP (Rickettsia canadensis (strain McKiel)).